The primary structure comprises 525 residues: Phosphoenolpyruvate carboxykinase (ATP) (525 aa).

Substrate is bound by residues arginine 54, tyrosine 190, and lysine 196. ATP-binding positions include lysine 196, histidine 215, and 231-239 (GLSGTGKTT). Mn(2+) is bound by residues lysine 196 and histidine 215. Aspartate 252 is a binding site for Mn(2+). Residues glutamate 280, arginine 316, and threonine 441 each contribute to the ATP site. Arginine 316 is a binding site for substrate.

This sequence belongs to the phosphoenolpyruvate carboxykinase (ATP) family. The cofactor is Mn(2+).

The protein resides in the cytoplasm. It catalyses the reaction oxaloacetate + ATP = phosphoenolpyruvate + ADP + CO2. It participates in carbohydrate biosynthesis; gluconeogenesis. Its function is as follows. Involved in the gluconeogenesis. Catalyzes the conversion of oxaloacetate (OAA) to phosphoenolpyruvate (PEP) through direct phosphoryl transfer between the nucleoside triphosphate and OAA. The sequence is that of Phosphoenolpyruvate carboxykinase (ATP) from Nitratiruptor sp. (strain SB155-2).